The sequence spans 328 residues: MKVAIVGASGYAGGELVRLLYHHSSAEVTCVTSRSLAGIPLSEVHPQLTGFSDLRFENPAPDAIDADVAFLAVPHTAAMTIAGKLLSRGIKVVDLSADYRLPKDTFEKVYGVTHTDYFPAPYGIPELHRKECINAKFVANPGCFPTGATLAAAPIASRAHTIIFDSKTGVSGAGDNPSATTHYPNVGDNVSPYKWTSHRHLAEMKQELSKLGSKAACYFTPHLVPVNRGILTTAHILLNEPLETKEVEKLYREYYKDEFFVRYQKPMLSAVRGSNFCDIMVESEGKRVVVVSAIDNLVKGASGQAIQNMNLMCGFKETDGLDAPGLLP.

Cysteine 143 is a catalytic residue.

Belongs to the NAGSA dehydrogenase family. Type 1 subfamily.

The protein resides in the cytoplasm. The enzyme catalyses N-acetyl-L-glutamate 5-semialdehyde + phosphate + NADP(+) = N-acetyl-L-glutamyl 5-phosphate + NADPH + H(+). Its pathway is amino-acid biosynthesis; L-arginine biosynthesis; N(2)-acetyl-L-ornithine from L-glutamate: step 3/4. Catalyzes the NADPH-dependent reduction of N-acetyl-5-glutamyl phosphate to yield N-acetyl-L-glutamate 5-semialdehyde. In Methanoregula boonei (strain DSM 21154 / JCM 14090 / 6A8), this protein is N-acetyl-gamma-glutamyl-phosphate reductase.